The chain runs to 86 residues: Probable weak neurotoxin NNAM3 (86 aa).

Positions 1-21 (MKTLLLTLVVVTIVCLDLGYT) are cleaved as a signal peptide. 5 cysteine pairs are disulfide-bonded: C24/C45, C27/C32, C38/C63, C67/C78, and C79/C84.

This sequence belongs to the three-finger toxin family. Ancestral subfamily. Orphan group II sub-subfamily. As to expression, expressed by the venom gland.

The protein resides in the secreted. Functionally, binds with low affinity to muscular (alpha-1-beta-1-delta-epsilon/CHRNA1-CHRNB1-CHRND-CHRNE) and very low affinity to neuronal (alpha-7/CHRNA7) nicotinic acetylcholine receptor (nAChR). This is Probable weak neurotoxin NNAM3 from Naja atra (Chinese cobra).